The sequence spans 221 residues: Interleukin-12 subunit alpha (221 aa).

The signal sequence occupies residues 1–25; it reads MCPLRSLLLLSTLVLLHHLPHLSLG. Intrachain disulfides connect Cys39–Cys112, Cys66–Cys198, and Cys87–Cys125. Asn41 and Asn95 each carry an N-linked (GlcNAc...) asparagine glycan.

This sequence belongs to the IL-6 superfamily. As to quaternary structure, heterodimer with IL12B; disulfide-linked. This heterodimer is known as interleukin IL-12. Heterodimer with EBI3/IL27B; not disulfide-linked. This heterodimer is known as interleukin IL-35. Interacts with NBR1; this interaction promotes IL-12 secretion.

The protein localises to the secreted. Heterodimerizes with IL12B to form the IL-12 cytokine or with EBI3/IL27B to form the IL-35 cytokine. IL-12 is primarily produced by professional antigen-presenting cells (APCs) such as B-cells and dendritic cells (DCs) as well as macrophages and granulocytes and regulates T-cell and natural killer-cell responses, induces the production of interferon-gamma (IFN-gamma), favors the differentiation of T-helper 1 (Th1) cells and is an important link between innate resistance and adaptive immunity. Mechanistically, exerts its biological effects through a receptor composed of IL12R1 and IL12R2 subunits. Binding to the receptor results in the rapid tyrosine phosphorylation of a number of cellular substrates including the JAK family kinases TYK2 and JAK2. In turn, recruited STAT4 gets phosphorylated and translocates to the nucleus where it regulates cytokine/growth factor responsive genes. As part of IL-35, plays essential roles in maintaining the immune homeostasis of the liver microenvironment and also functions as an immune-suppressive cytokine. Mediates biological events through unconventional receptors composed of IL12RB2 and gp130/IL6ST heterodimers or homodimers. Signaling requires the transcription factors STAT1 and STAT4, which form a unique heterodimer that binds to distinct DNA sites. In Cervus elaphus (Red deer), this protein is Interleukin-12 subunit alpha (IL12A).